The primary structure comprises 256 residues: uncharacterized protein (256 aa).

The next 3 membrane-spanning stretches (helical) occupy residues 42 to 62, 73 to 93, and 108 to 128; these read LIAL…IWFF, FFTL…LIFL, and WLFL…WLIV.

The protein localises to the cell membrane. This is an uncharacterized protein from Mycoplasma genitalium (strain ATCC 33530 / DSM 19775 / NCTC 10195 / G37) (Mycoplasmoides genitalium).